A 635-amino-acid polypeptide reads, in one-letter code: Threonine--tRNA ligase (635 aa).

One can recognise a TGS domain in the interval 1 to 61; that stretch reads MITVRLPDGS…EQDSDLSIIT (61 aa). The tract at residues 242-533 is catalytic; that stretch reads DHRKLGRALD…LIENHAGALP (292 aa). The Zn(2+) site is built by C333, H384, and H510.

This sequence belongs to the class-II aminoacyl-tRNA synthetase family. As to quaternary structure, homodimer. Zn(2+) serves as cofactor.

It localises to the cytoplasm. It carries out the reaction tRNA(Thr) + L-threonine + ATP = L-threonyl-tRNA(Thr) + AMP + diphosphate + H(+). Its function is as follows. Catalyzes the attachment of threonine to tRNA(Thr) in a two-step reaction: L-threonine is first activated by ATP to form Thr-AMP and then transferred to the acceptor end of tRNA(Thr). Also edits incorrectly charged L-seryl-tRNA(Thr). This chain is Threonine--tRNA ligase, found in Herminiimonas arsenicoxydans.